A 615-amino-acid polypeptide reads, in one-letter code: Semenogelin-1 (615 aa).

An N-terminal signal peptide occupies residues 1 to 23 (MKPIIFLVLSLLLILEKQAAVMG). At glutamine 24 the chain carries Pyrrolidone carboxylic acid. Disordered stretches follow at residues 24–118 (QKGG…EHGK), 133–160 (GHAPHGTQNPSQDQGNSTSGKGISSQDS), and 172–585 (GKEQ…HRSY). A compositionally biased stretch (polar residues) spans 34–46 (SESSQFPHGQKGQ). Basic and acidic residues predominate over residues 50 to 80 (ARKDKQHAESKRSVSIEHTYHVDIPDHDQTR). Polar residues predominate over residues 81 to 91 (TSKQYDLNAQN). The segment covering 107–118 (FNHKQEGREHGK) has biased composition (basic and acidic residues). Polar residues-rich tracts occupy residues 138–160 (GTQNPSQDQGNSTSGKGISSQDS), 177–196 (SVSGTQRNGTQGGSQSSPVL), and 209–224 (TQNSLQNKGSSPNVNE). 3 N-linked (GlcNAc...) asparagine glycosylation sites follow: asparagine 148, asparagine 184, and asparagine 223. Positions 241-253 (QEDRLQHGSKDVF) are enriched in basic and acidic residues. A compositionally biased stretch (polar residues) spans 254–265 (SKNQNQTRNPNQ). 2 N-linked (GlcNAc...) asparagine glycosylation sites follow: asparagine 258 and asparagine 275. A compositionally biased stretch (basic and acidic residues) spans 283 to 300 (TEERRPNHGEKGIQKDAS). N-linked (GlcNAc...) asparagine glycosylation occurs at asparagine 306. Basic and acidic residues predominate over residues 308–317 (TEDKMHDKSQ). An N-linked (GlcNAc...) asparagine glycan is attached at asparagine 332. The segment covering 341 to 358 (TEERRPNHGEKGIQKDAS) has biased composition (basic and acidic residues). An N-linked (GlcNAc...) asparagine glycan is attached at asparagine 364. The segment covering 366-375 (TEDKMHDKSQ) has biased composition (basic and acidic residues). Asparagine 390 carries an N-linked (GlcNAc...) asparagine glycan. Basic and acidic residues predominate over residues 399 to 416 (TEERRPNHGEKGIQKDAS). A glycan (N-linked (GlcNAc...) asparagine) is linked at asparagine 422. The span at 424-433 (TEDKMHDKSQ) shows a compositional bias: basic and acidic residues. Residue asparagine 448 is glycosylated (N-linked (GlcNAc...) asparagine). Residues 457 to 474 (TEERRPNHGEKGIQKDAS) show a composition bias toward basic and acidic residues. The N-linked (GlcNAc...) asparagine glycan is linked to asparagine 480. A compositionally biased stretch (basic and acidic residues) spans 481–491 (KTEDKMHDKSQ). A glycan (N-linked (GlcNAc...) asparagine) is linked at asparagine 506. Basic and acidic residues predominate over residues 515–532 (TEERRPNHGEKGIQKDAS). An N-linked (GlcNAc...) asparagine glycan is attached at asparagine 538. The segment covering 539–549 (KTEDEKHDKSQ) has biased composition (basic and acidic residues). Over residues 550 to 563 (KQVTTPSQDQQSGQ) the composition is skewed to polar residues.

The protein belongs to the semenogelin family. As to quaternary structure, occurs in disulfide-linked complexes. Transglutaminase substrate. In terms of processing, rapidly cleaved after ejaculation by KLK3/PSA, resulting in liquefaction of the semen coagulum and the progressive release of motile spermatozoa.

The protein resides in the secreted. In terms of biological role, predominant protein in semen. It participates in the formation of a gel matrix entrapping the accessory gland secretions and ejaculated spermatozoa. Fragments of semenogelin and/or fragments of the related proteins may contribute to the activation of progressive sperm movements as the gel-forming proteins are fragmented by KLK3/PSA. This is Semenogelin-1 (SEMG1) from Saguinus oedipus (Cotton-top tamarin).